The chain runs to 415 residues: Esterase FrsA (415 aa).

The protein belongs to the FrsA family.

It carries out the reaction a carboxylic ester + H2O = an alcohol + a carboxylate + H(+). Its function is as follows. Catalyzes the hydrolysis of esters. This is Esterase FrsA from Vibrio parahaemolyticus serotype O3:K6 (strain RIMD 2210633).